A 196-amino-acid chain; its full sequence is Penicillin-binding protein activator LpoB (196 aa).

The first 16 residues, 1–16 (MKKYLGIVLMALVIAG), serve as a signal peptide directing secretion. Residue Cys-17 is the site of N-palmitoyl cysteine attachment. Cys-17 carries S-diacylglycerol cysteine lipidation. The tract at residues 24–54 (TEQPATIEPAVPTPSKPQLPPSESQPLPTPP) is disordered. Residues 34–43 (VPTPSKPQLP) show a composition bias toward pro residues.

This sequence belongs to the LpoB family. Interacts with PBP1b.

Its subcellular location is the cell outer membrane. Its function is as follows. Regulator of peptidoglycan synthesis that is essential for the function of penicillin-binding protein 1B (PBP1b). In Dickeya dadantii (strain 3937) (Erwinia chrysanthemi (strain 3937)), this protein is Penicillin-binding protein activator LpoB.